The primary structure comprises 235 residues: Transmembrane protein 215 (235 aa).

A run of 2 helical transmembrane segments spans residues 12-32 (LVVA…VSGM) and 40-60 (IPLL…IALA). A disordered region spans residues 99-158 (SDLESGKGSSDELAKKAGLRGKPSLQGQGELPMASSITTPTPMEEGECQSPGQSGRREET).

Its subcellular location is the membrane. This chain is Transmembrane protein 215 (TMEM215), found in Bos taurus (Bovine).